The chain runs to 97 residues: UPF0235 protein DET1292 (97 aa).

The protein belongs to the UPF0235 family.

This is UPF0235 protein DET1292 from Dehalococcoides mccartyi (strain ATCC BAA-2266 / KCTC 15142 / 195) (Dehalococcoides ethenogenes (strain 195)).